The following is a 72-amino-acid chain: Mitochondrial import receptor subunit TOM7-1 (72 aa).

The Cytoplasmic segment spans residues 2-41 (LKPKGKNTKKAAAADEDDGAVAVVGKFVKEWGTWTAKKAK). A helical transmembrane segment spans residues 42–59 (VITHYGFIPLVIIIGMNS). At 60–72 (EPKPSLSQLLSPV) the chain is on the mitochondrial intermembrane side.

Belongs to the Tom7 family. Forms part of the preprotein translocase complex of the outer mitochondrial membrane (TOM complex).

It localises to the mitochondrion outer membrane. In terms of biological role, seems to act as a modulator of the dynamics of the mitochondrial protein transport machinery. Seems to promote the dissociation of subunits of the outer membrane translocase. This Solanum tuberosum (Potato) protein is Mitochondrial import receptor subunit TOM7-1 (TOM7-1).